Here is a 421-residue protein sequence, read N- to C-terminus: MHDAVTRPTPPADATAWPRRITRAVKIGSVTVGGGHPVVVQSMTNTDTADIAGSVKQVADLWRAGSEMVRLTVNNAESAAAIPRIVDKLRMMGIEVPLIGDFHYNGHQLLAAEPACAEALAKYRINPGNVGFGKKKDLQFGQLIEFAIKYGKPVRIGANWGSLDQSLAAQLMDENSQRDTPWDAGRVLREALIRSAVDSAERAVELGLPRERIILSAKVSGVQELIAVYRDMASRCDFALHLGLTEAGIGSKGIVASAAALSVLLQEGIGDTIRISLTPEPGQSRTQEVVVAQELLQTTGQRAFTPMVTACPGCGRTTSEFFQELAGVVQNHVRAKMPEWKITNPGAENMTLAVMGCVVNGPGESRHANIGISLPGTGEAPSAPVFIDGEKSVTLRGENIAYEFIELIDQYVERTYVRRAG.

The [4Fe-4S] cluster site is built by Cys-311, Cys-314, Cys-357, and Glu-364.

It belongs to the IspG family. It depends on [4Fe-4S] cluster as a cofactor.

It carries out the reaction (2E)-4-hydroxy-3-methylbut-2-enyl diphosphate + oxidized [flavodoxin] + H2O + 2 H(+) = 2-C-methyl-D-erythritol 2,4-cyclic diphosphate + reduced [flavodoxin]. It functions in the pathway isoprenoid biosynthesis; isopentenyl diphosphate biosynthesis via DXP pathway; isopentenyl diphosphate from 1-deoxy-D-xylulose 5-phosphate: step 5/6. Functionally, converts 2C-methyl-D-erythritol 2,4-cyclodiphosphate (ME-2,4cPP) into 1-hydroxy-2-methyl-2-(E)-butenyl 4-diphosphate. The polypeptide is 4-hydroxy-3-methylbut-2-en-1-yl diphosphate synthase (flavodoxin) (Xanthomonas axonopodis pv. citri (strain 306)).